The primary structure comprises 503 residues: ATP synthase subunit alpha (503 aa).

169–176 (GDRKTGKT) is a binding site for ATP.

Belongs to the ATPase alpha/beta chains family. In terms of assembly, F-type ATPases have 2 components, CF(1) - the catalytic core - and CF(0) - the membrane proton channel. CF(1) has five subunits: alpha(3), beta(3), gamma(1), delta(1), epsilon(1). CF(0) has three main subunits: a(1), b(2) and c(9-12). The alpha and beta chains form an alternating ring which encloses part of the gamma chain. CF(1) is attached to CF(0) by a central stalk formed by the gamma and epsilon chains, while a peripheral stalk is formed by the delta and b chains.

It is found in the cell membrane. It catalyses the reaction ATP + H2O + 4 H(+)(in) = ADP + phosphate + 5 H(+)(out). Functionally, produces ATP from ADP in the presence of a proton gradient across the membrane. The alpha chain is a regulatory subunit. This Lactobacillus delbrueckii subsp. bulgaricus (strain ATCC BAA-365 / Lb-18) protein is ATP synthase subunit alpha.